Here is a 161-residue protein sequence, read N- to C-terminus: Ubiquitin-conjugating enzyme E2Q-like protein 1 (161 aa).

Residues 1–154 (MKELQDIARL…VKTHEKYGWV (154 aa)) form the UBC core domain. The Glycyl thioester intermediate role is filled by Cys-88.

This sequence belongs to the ubiquitin-conjugating enzyme family. As to quaternary structure, interacts with FBXW7.

The protein localises to the nucleus. It carries out the reaction S-ubiquitinyl-[E1 ubiquitin-activating enzyme]-L-cysteine + [E2 ubiquitin-conjugating enzyme]-L-cysteine = [E1 ubiquitin-activating enzyme]-L-cysteine + S-ubiquitinyl-[E2 ubiquitin-conjugating enzyme]-L-cysteine.. Its pathway is protein modification; protein ubiquitination. Probable E2 ubiquitin-protein ligase that catalyzes the covalent attachment of ubiquitin to target proteins. May facilitate the monoubiquitination and degradation of MTOR and CCNE1 through interaction with FBXW7. The protein is Ubiquitin-conjugating enzyme E2Q-like protein 1 (UBE2QL1) of Homo sapiens (Human).